A 401-amino-acid polypeptide reads, in one-letter code: Divinyl chlorophyllide a 8-vinyl-reductase, chloroplastic (401 aa).

Residues Met1–Leu10 are compositionally biased toward polar residues. The segment at Met1–Arg26 is disordered. The transit peptide at Met1–Pro54 directs the protein to the chloroplast.

It localises to the plastid. It is found in the chloroplast. The catalysed reaction is protochlorophyllide a + NADP(+) = 3,8-divinyl protochlorophyllide a + NADPH + H(+). It participates in porphyrin-containing compound metabolism; chlorophyll biosynthesis. Catalyzes the conversion of divinyl chlorophyllide to monovinyl chlorophyllide. Reduces the 8-vinyl group of the tetrapyrrole to an ethyl group using NADPH as the reductant. Can use (3,8-divinyl)-chlorophyllide a (DV-Chlidea) &gt; (3,8-divinyl)-chlorophyll a (DV-Chla) &gt; (3,8-divinyl)-protochlorophyllide a (DV-Pchlidea) &gt; (3,8-divinyl)-magnesium-protoporphyrin IX monomethyl ester (DV-MPE) &gt; (3,8-divinyl)-magnesium-protoporphyrin IX (DV-Mg-Proto) as substrates. The sequence is that of Divinyl chlorophyllide a 8-vinyl-reductase, chloroplastic (DVR) from Zea mays (Maize).